The sequence spans 878 residues: MKKLIYYFGSNGSDGNASMKNVLGNKGAGLAEMSNLKLPIPDGFTITTELCNYFYTHNNNFPKNFQNDLKKAITELEITTGKIFGSTSNPLLLSVRSGSTVSMPGMMDTILNLGMNNEVCNALTDSCGDKRFALDSYKRFLEMYGTTVLSIPSDLFEQIYEKHKIQADIHKDSDITVELLEKIIDDFKWLHIKYTKQLINDPYEQLESAIKAVLHSWMSNRAVIYRKINNISEGFGTAINIQAMVFGNLGKTSATGVAFTRSPSTGEKKLFGEFLINAQGEDIVSGTRTPMPIIANDSNSMQAMMPEVFKELSQIAKKLEEHYLDMQDIEFTIENNKLYILQTRTAKRTAIAAINIAVQMVEEKLISKEQALMRIDPESLNQLLHTRIDYSKGLTSIAEGLPASPGAATGIAVFSPYDAEKLSHHHKVILVRHDTSPEDINGMHVSSGILTIRGGMTSHAAVVARGMGKPCVCGTSNLSIDEKKQILTAGDIVIKQGDIITIDGGSGKIFLGEMPLIQPTFSEESKLILDWADEISSLKVRANAETVNDALVSIKFGAQGIGLCRSEHMFFDKNKIPLVREMIIAPDIERRKLAVQKLLPLQMEDFKALFRVMKDKPVNIRLLDPPLHEFLPTTEEDKKNLANSLNLPLSMINQRLHAMHEVNPMLGHRGCRLGICSPEIYQMQIEAIFTAIFELHKKEHIECNLELMMPLISNVGEIKKLKMDIYEVIEELEQRYRYKFSFMLGTMIELPRAALGSKKIAKEVDYFSFGTNDLTQTTYGISRDDIASFLPYYLEEKIFESDPFTTLDEEGVGELIEIALKRGKSSNANLKLGACGEHAGNPASIEFFHRMNLNYVSCSPYRIPIARIASAQAKIKHG.

The N-terminal stretch occupies residues 1 to 347 (MKKLIYYFGS…LYILQTRTAK (347 aa)). Arginine 96 is an ATP binding site. Residues 348-404 (RTAIAAINIAVQMVEEKLISKEQALMRIDPESLNQLLHTRIDYSKGLTSIAEGLPAS) form a linker 1 region. The interval 405-502 (PGAATGIAVF…VIKQGDIITI (98 aa)) is central. Threonine 457 is modified (phosphothreonine; by PDRP1). Residue histidine 459 is the Tele-phosphohistidine intermediate of the active site. Positions 503–537 (DGGSGKIFLGEMPLIQPTFSEESKLILDWADEISS) are linker 2. A C-terminal region spans residues 538 to 878 (LKVRANAETV…ASAQAKIKHG (341 aa)). 7 residues coordinate substrate: arginine 565, arginine 621, glutamate 749, glycine 770, threonine 771, asparagine 772, and aspartate 773. Glutamate 749 serves as a coordination point for Mg(2+). Aspartate 773 is a binding site for Mg(2+). Cysteine 835 serves as the catalytic Proton donor.

Belongs to the PEP-utilizing enzyme family. In terms of assembly, homodimer. Mg(2+) is required as a cofactor. In terms of processing, phosphorylation of Thr-457 in the dark inactivates the enzyme. Dephosphorylation upon light stimulation reactivates the enzyme.

The enzyme catalyses pyruvate + phosphate + ATP = phosphoenolpyruvate + AMP + diphosphate + H(+). Its activity is regulated as follows. Activated by light-induced dephosphorylation. Inhibited by dark-induced phosphorylation. Both reactions are catalyzed by PDRP1. In terms of biological role, catalyzes the reversible phosphorylation of pyruvate and phosphate. This chain is Pyruvate, phosphate dikinase (ppdK), found in Rickettsia felis (strain ATCC VR-1525 / URRWXCal2) (Rickettsia azadi).